The following is a 319-amino-acid chain: Olfactory receptor 10Q1 (319 aa).

Residues 1–29 (MPVGKLVFNQSEPTEFVFRAFTTATEFQV) are Extracellular-facing. A glycan (N-linked (GlcNAc...) asparagine) is linked at N9. The helical transmembrane segment at 30–50 (LLFLLFLLLYLMILCGNTAII) threads the bilayer. Residues 51–58 (WVVCTHST) lie on the Cytoplasmic side of the membrane. The chain crosses the membrane as a helical span at residues 59-79 (LRTPMYFFLSNLSFLELCYTT). Residues 80–103 (VVVPLMLSNILGAQKPISLAGCGA) lie on the Extracellular side of the membrane. An intrachain disulfide couples C101 to C194. Residues 104 to 124 (QMFFFVTLGSTDCFLLAIMAY) traverse the membrane as a helical segment. Residues 125–143 (DRYVAICHPLHYTLIMTRE) lie on the Cytoplasmic side of the membrane. A helical membrane pass occupies residues 144 to 164 (LCTQMLGGALGLALFPSLQLT). The Extracellular portion of the chain corresponds to 165 to 202 (ALIFTLPFCGHHQEINHFLCDVPPVLRLACADIRVHQA). The chain crosses the membrane as a helical span at residues 203–222 (VLYVVSILVLTIPFLLICVS). Residues 223-242 (YVFITCAILSIRSAEGRRRA) lie on the Cytoplasmic side of the membrane. Residues 243-263 (FSTCSFHLTVVLLQYGCCSLV) form a helical membrane-spanning segment. Residues 264-276 (YLRPRSSTSEDED) are Extracellular-facing. A helical membrane pass occupies residues 277-297 (SQIALVYTFVTPLLNPLLYSL). At 298–319 (RNKDVKGALRSAIIRKAASDAN) the chain is on the cytoplasmic side.

It belongs to the G-protein coupled receptor 1 family.

It localises to the cell membrane. Odorant receptor. The protein is Olfactory receptor 10Q1 (OR10Q1) of Homo sapiens (Human).